A 250-amino-acid polypeptide reads, in one-letter code: Ribosomal RNA small subunit methyltransferase J (250 aa).

Residues 101–102 (RD), 117–118 (ER), 153–154 (SS), and D171 contribute to the S-adenosyl-L-methionine site.

Belongs to the methyltransferase superfamily. RsmJ family.

The protein resides in the cytoplasm. The enzyme catalyses guanosine(1516) in 16S rRNA + S-adenosyl-L-methionine = N(2)-methylguanosine(1516) in 16S rRNA + S-adenosyl-L-homocysteine + H(+). Specifically methylates the guanosine in position 1516 of 16S rRNA. This chain is Ribosomal RNA small subunit methyltransferase J, found in Escherichia fergusonii (strain ATCC 35469 / DSM 13698 / CCUG 18766 / IAM 14443 / JCM 21226 / LMG 7866 / NBRC 102419 / NCTC 12128 / CDC 0568-73).